The sequence spans 434 residues: D-inositol 3-phosphate glycosyltransferase (434 aa).

H26 provides a ligand contact to 1D-myo-inositol 3-phosphate. Residues 32–33 (QP) and G40 each bind UDP-N-acetyl-alpha-D-glucosamine. Residues 37-42 (DAGGMN), K95, Y128, T152, and R172 each bind 1D-myo-inositol 3-phosphate. The UDP-N-acetyl-alpha-D-glucosamine site is built by R246 and K251. The Mg(2+) site is built by Y321, R322, and A324. E334 and E342 together coordinate UDP-N-acetyl-alpha-D-glucosamine. T348 contacts Mg(2+).

This sequence belongs to the glycosyltransferase group 1 family. MshA subfamily. Homodimer.

The enzyme catalyses 1D-myo-inositol 3-phosphate + UDP-N-acetyl-alpha-D-glucosamine = 1D-myo-inositol 2-acetamido-2-deoxy-alpha-D-glucopyranoside 3-phosphate + UDP + H(+). Functionally, catalyzes the transfer of a N-acetyl-glucosamine moiety to 1D-myo-inositol 3-phosphate to produce 1D-myo-inositol 2-acetamido-2-deoxy-glucopyranoside 3-phosphate in the mycothiol biosynthesis pathway. This Thermobifida fusca (strain YX) protein is D-inositol 3-phosphate glycosyltransferase.